Consider the following 285-residue polypeptide: NAD kinase (285 aa).

Aspartate 67 acts as the Proton acceptor in catalysis. Residues 67–68 (DG), 141–142 (ND), arginine 152, lysine 169, aspartate 171, 182–187 (TGYSLS), and glutamine 242 each bind NAD(+).

Belongs to the NAD kinase family. A divalent metal cation serves as cofactor.

It localises to the cytoplasm. The catalysed reaction is NAD(+) + ATP = ADP + NADP(+) + H(+). In terms of biological role, involved in the regulation of the intracellular balance of NAD and NADP, and is a key enzyme in the biosynthesis of NADP. Catalyzes specifically the phosphorylation on 2'-hydroxyl of the adenosine moiety of NAD to yield NADP. The chain is NAD kinase from Trichlorobacter lovleyi (strain ATCC BAA-1151 / DSM 17278 / SZ) (Geobacter lovleyi).